Reading from the N-terminus, the 247-residue chain is UPF0280 protein MmarC6_1437 (247 aa).

This sequence belongs to the UPF0280 family.

The protein is UPF0280 protein MmarC6_1437 of Methanococcus maripaludis (strain C6 / ATCC BAA-1332).